The following is a 247-amino-acid chain: 3-deoxy-manno-octulosonate cytidylyltransferase (247 aa).

The protein belongs to the KdsB family.

It localises to the cytoplasm. It carries out the reaction 3-deoxy-alpha-D-manno-oct-2-ulosonate + CTP = CMP-3-deoxy-beta-D-manno-octulosonate + diphosphate. Its pathway is nucleotide-sugar biosynthesis; CMP-3-deoxy-D-manno-octulosonate biosynthesis; CMP-3-deoxy-D-manno-octulosonate from 3-deoxy-D-manno-octulosonate and CTP: step 1/1. It participates in bacterial outer membrane biogenesis; lipopolysaccharide biosynthesis. In terms of biological role, activates KDO (a required 8-carbon sugar) for incorporation into bacterial lipopolysaccharide in Gram-negative bacteria. The protein is 3-deoxy-manno-octulosonate cytidylyltransferase of Afipia carboxidovorans (strain ATCC 49405 / DSM 1227 / KCTC 32145 / OM5) (Oligotropha carboxidovorans).